Consider the following 1048-residue polypeptide: Probable beta-glucosidase E (1048 aa).

The segment at 1–54 is disordered; that stretch reads MPPPPFRDAPSSAKSSQRYTPLHESIPEELNDKQYSSDADSLPLSDPSDGEDDS. Residues 1–150 are Cytoplasmic-facing; that stretch reads MPPPPFRDAP…WRTVYYSKYW (150 aa). Residues 36-47 are compositionally biased toward low complexity; the sequence is SSDADSLPLSDP. A helical; Signal-anchor for type II membrane protein transmembrane segment spans residues 151-171; the sequence is WRALIGVVVVLVLLVLVFLGL. The Extracellular segment spans residues 172–1048; sequence ARSKQVGDEL…SRDLPLHGKY (877 aa). Asparagine 216, asparagine 224, and asparagine 410 each carry an N-linked (GlcNAc...) asparagine glycan. The active site involves aspartate 438. 5 N-linked (GlcNAc...) asparagine glycosylation sites follow: asparagine 481, asparagine 520, asparagine 578, asparagine 895, and asparagine 991. Residues 508–527 form a disordered region; that stretch reads WERPPPDGEGGPNFSSWTDD.

This sequence belongs to the glycosyl hydrolase 3 family.

The protein resides in the cell membrane. It carries out the reaction Hydrolysis of terminal, non-reducing beta-D-glucosyl residues with release of beta-D-glucose.. Its pathway is glycan metabolism; cellulose degradation. In terms of biological role, beta-glucosidases are one of a number of cellulolytic enzymes involved in the degradation of cellulosic biomass. Catalyzes the last step releasing glucose from the inhibitory cellobiose. This is Probable beta-glucosidase E (bglE) from Aspergillus oryzae (strain ATCC 42149 / RIB 40) (Yellow koji mold).